We begin with the raw amino-acid sequence, 252 residues long: Ribosomal RNA small subunit methyltransferase NEP1 (252 aa).

S-adenosyl-L-methionine-binding positions include Leu180, Gly207, 212-214 (GKD), and 227-232 (LSNYPL).

This sequence belongs to the class IV-like SAM-binding methyltransferase superfamily. RNA methyltransferase NEP1 family. In terms of assembly, homodimer. Interacts with snoRNA U3. Interacts with NOP14 and MPP10. Component of the ribosomal small subunit (SSU) processome composed of at least 40 protein subunits and snoRNA U3.

It localises to the nucleus. The protein localises to the nucleolus. It catalyses the reaction pseudouridine(1191) in yeast 18S rRNA + S-adenosyl-L-methionine = N(1)-methylpseudouridine(1191) in yeast 18S rRNA + S-adenosyl-L-homocysteine + H(+). Functionally, S-adenosyl-L-methionine-dependent pseudouridine N(1)-methyltransferase that methylates pseudouridine at position 1189 (Psi1189) in 18S rRNA. Involved the biosynthesis of the hypermodified N1-methyl-N3-(3-amino-3-carboxypropyl) pseudouridine (m1acp3-Psi) conserved in eukaryotic 18S rRNA. N1-methylation is independent on acp-modification at the N3-position of U1191. Also has an essential role in 40S ribosomal subunit biogenesis independent on its methyltransferase activity, facilitating the incorporation of ribosomal protein S19 (RPS19A/RPS19B) during the formation of pre-ribosomes. In Saccharomyces cerevisiae (strain ATCC 204508 / S288c) (Baker's yeast), this protein is Ribosomal RNA small subunit methyltransferase NEP1.